Reading from the N-terminus, the 919-residue chain is Alanine--tRNA ligase (919 aa).

The Zn(2+) site is built by H565, H569, C667, and H671.

The protein belongs to the class-II aminoacyl-tRNA synthetase family. Requires Zn(2+) as cofactor.

The protein localises to the cytoplasm. The catalysed reaction is tRNA(Ala) + L-alanine + ATP = L-alanyl-tRNA(Ala) + AMP + diphosphate. Its function is as follows. Catalyzes the attachment of alanine to tRNA(Ala) in a two-step reaction: alanine is first activated by ATP to form Ala-AMP and then transferred to the acceptor end of tRNA(Ala). Also edits incorrectly charged Ser-tRNA(Ala) and Gly-tRNA(Ala) via its editing domain. The sequence is that of Alanine--tRNA ligase from Leptospira biflexa serovar Patoc (strain Patoc 1 / Ames).